Consider the following 479-residue polypeptide: UDP-N-acetylmuramoyl-L-alanyl-D-glutamate--2,6-diaminopimelate ligase (479 aa).

UDP-N-acetyl-alpha-D-muramoyl-L-alanyl-D-glutamate is bound at residue serine 21. 98-104 (GTNGKSS) contributes to the ATP binding site. Residues 144 to 145 (TT), serine 171, glutamine 177, and arginine 179 contribute to the UDP-N-acetyl-alpha-D-muramoyl-L-alanyl-D-glutamate site. Position 211 is an N6-carboxylysine (lysine 211). Meso-2,6-diaminopimelate contacts are provided by residues arginine 372, 396–399 (DNPR), glycine 446, and glutamate 450. The Meso-diaminopimelate recognition motif motif lies at 396–399 (DNPR).

This sequence belongs to the MurCDEF family. MurE subfamily. Requires Mg(2+) as cofactor. In terms of processing, carboxylation is probably crucial for Mg(2+) binding and, consequently, for the gamma-phosphate positioning of ATP.

Its subcellular location is the cytoplasm. The catalysed reaction is UDP-N-acetyl-alpha-D-muramoyl-L-alanyl-D-glutamate + meso-2,6-diaminopimelate + ATP = UDP-N-acetyl-alpha-D-muramoyl-L-alanyl-gamma-D-glutamyl-meso-2,6-diaminopimelate + ADP + phosphate + H(+). It participates in cell wall biogenesis; peptidoglycan biosynthesis. Functionally, catalyzes the addition of meso-diaminopimelic acid to the nucleotide precursor UDP-N-acetylmuramoyl-L-alanyl-D-glutamate (UMAG) in the biosynthesis of bacterial cell-wall peptidoglycan. In Rickettsia conorii (strain ATCC VR-613 / Malish 7), this protein is UDP-N-acetylmuramoyl-L-alanyl-D-glutamate--2,6-diaminopimelate ligase.